The chain runs to 343 residues: MAVCPYGAAAVVMALLSAAIAFHCSPLLAVLQRALSLHTAHATKDMDNLFQLVRNIVPALTSKKHKGQDGRIGIVGGCQEYTGAPYFAGISALKVGADLTHVFCAREAAPVIKSYSPELIVHPVLDSSDAVEEVEKWLPRLHALVVGPGLGRDDLLLNNVRGILESTKARDIPVVIDADGLWLIAQRPALVHGYQKAVLTPNHVEFSRLWDAVLSSPMDTSNHSGSVLKLSQALGNITIVQKGEQDLISNGQQVLVCNQEGSSRRCGGQGDLLSGSLGVMAHWALRAGPEKTNGSSPLLVAAWGACTLTRECNHLAFQKYGRSTTTTDMIAEVGAAFSKLFTT.

Residues 1–42 (MAVCPYGAAAVVMALLSAAIAFHCSPLLAVLQRALSLHTAHA) constitute a mitochondrion transit peptide. The 292-residue stretch at 49–340 (LFQLVRNIVP…AEVGAAFSKL (292 aa)) folds into the YjeF C-terminal domain. K63 carries the post-translational modification N6-acetyllysine. The residue at position 81 (Y81) is a Phosphotyrosine. (6S)-NADPHX contacts are provided by residues G149 and 202–208 (NHVEFSR). ATP is bound by residues 242-246 (KGEQD) and 261-270 (GSSRRCGGQG). A (6S)-NADPHX-binding site is contributed by D271.

The protein belongs to the NnrD/CARKD family. The cofactor is Mg(2+).

Its subcellular location is the mitochondrion. It carries out the reaction (6S)-NADHX + ATP = ADP + phosphate + NADH + H(+). It catalyses the reaction (6S)-NADPHX + ATP = ADP + phosphate + NADPH + H(+). Catalyzes the dehydration of the S-form of NAD(P)HX at the expense of ATP, which is converted to ADP. Together with NAD(P)HX epimerase, which catalyzes the epimerization of the S- and R-forms, the enzyme allows the repair of both epimers of NAD(P)HX, a damaged form of NAD(P)H that is a result of enzymatic or heat-dependent hydration. The chain is ATP-dependent (S)-NAD(P)H-hydrate dehydratase from Rattus norvegicus (Rat).